A 336-amino-acid chain; its full sequence is Glucokinase (336 aa).

12–17 provides a ligand contact to ATP; sequence ADIGGT.

It belongs to the bacterial glucokinase family.

The protein localises to the cytoplasm. It carries out the reaction D-glucose + ATP = D-glucose 6-phosphate + ADP + H(+). This is Glucokinase from Helicobacter pylori (strain P12).